We begin with the raw amino-acid sequence, 500 residues long: L-arabinose isomerase (500 aa).

Mn(2+) contacts are provided by Glu306, Glu333, His350, and His450.

The protein belongs to the arabinose isomerase family. Homohexamer. The cofactor is Mn(2+).

It catalyses the reaction beta-L-arabinopyranose = L-ribulose. It participates in carbohydrate degradation; L-arabinose degradation via L-ribulose; D-xylulose 5-phosphate from L-arabinose (bacterial route): step 1/3. Its function is as follows. Catalyzes the conversion of L-arabinose to L-ribulose. In Shigella boydii serotype 18 (strain CDC 3083-94 / BS512), this protein is L-arabinose isomerase.